The following is a 316-amino-acid chain: tRNA-cytidine(32) 2-sulfurtransferase (316 aa).

The interval 1–31 is disordered; it reads MGAVIDDSMPGPGADATGTGPSDARTERETR. Residues 10–21 show a composition bias toward low complexity; the sequence is PGPGADATGTGP. The PP-loop motif motif lies at 62–67; it reads SGGKDS. 3 residues coordinate [4Fe-4S] cluster: C137, C140, and C228.

This sequence belongs to the TtcA family. As to quaternary structure, homodimer. Mg(2+) is required as a cofactor. [4Fe-4S] cluster serves as cofactor.

The protein localises to the cytoplasm. It carries out the reaction cytidine(32) in tRNA + S-sulfanyl-L-cysteinyl-[cysteine desulfurase] + AH2 + ATP = 2-thiocytidine(32) in tRNA + L-cysteinyl-[cysteine desulfurase] + A + AMP + diphosphate + H(+). Its pathway is tRNA modification. Its function is as follows. Catalyzes the ATP-dependent 2-thiolation of cytidine in position 32 of tRNA, to form 2-thiocytidine (s(2)C32). The sulfur atoms are provided by the cysteine/cysteine desulfurase (IscS) system. This Verminephrobacter eiseniae (strain EF01-2) protein is tRNA-cytidine(32) 2-sulfurtransferase.